Reading from the N-terminus, the 341-residue chain is NADH-quinone oxidoreductase subunit H (341 aa).

A run of 8 helical transmembrane segments spans residues 16–36 (LLII…AVAY), 86–106 (VVFV…WAVI), 119–139 (VGVL…IMAG), 165–185 (IGFI…SDVV), 191–211 (MWFI…GLAE), 254–274 (GAMT…LGWL), 276–296 (IPGL…FLWV), and 315–335 (VFLP…TAFG).

The protein belongs to the complex I subunit 1 family. As to quaternary structure, NDH-1 is composed of 14 different subunits. Subunits NuoA, H, J, K, L, M, N constitute the membrane sector of the complex.

Its subcellular location is the cell inner membrane. The catalysed reaction is a quinone + NADH + 5 H(+)(in) = a quinol + NAD(+) + 4 H(+)(out). NDH-1 shuttles electrons from NADH, via FMN and iron-sulfur (Fe-S) centers, to quinones in the respiratory chain. The immediate electron acceptor for the enzyme in this species is believed to be ubiquinone. Couples the redox reaction to proton translocation (for every two electrons transferred, four hydrogen ions are translocated across the cytoplasmic membrane), and thus conserves the redox energy in a proton gradient. This subunit may bind ubiquinone. In Paramagnetospirillum magneticum (strain ATCC 700264 / AMB-1) (Magnetospirillum magneticum), this protein is NADH-quinone oxidoreductase subunit H.